Reading from the N-terminus, the 745-residue chain is Exocyst complex component 3 (745 aa).

Lys-28 carries the post-translational modification N6-acetyllysine.

The protein belongs to the SEC6 family. As to quaternary structure, the exocyst complex is composed of EXOC1, EXOC2, EXOC3, EXOC4, EXOC5, EXOC6, EXOC7 and EXOC8. Interacts with EXOC3L1. Interacts with BIRC6/bruce. Interacts with MYRIP. Interacts with SLC6A9. Expressed in epididymis (at protein level).

The protein resides in the cytoplasm. It is found in the perinuclear region. Its subcellular location is the cell projection. The protein localises to the growth cone. It localises to the midbody. The protein resides in the golgi apparatus. It is found in the neuron projection. Its function is as follows. Component of the exocyst complex involved in the docking of exocytic vesicles with fusion sites on the plasma membrane. In Homo sapiens (Human), this protein is Exocyst complex component 3 (EXOC3).